The following is a 719-amino-acid chain: B3 domain-containing protein Os03g0120900 (719 aa).

The segment at residues histidine 7–asparagine 110 is a DNA-binding region (TF-B3). Disordered stretches follow at residues arginine 328–glutamine 381 and glutamate 412–valine 443. Positions aspartate 351–proline 366 are enriched in basic and acidic residues. Residues histidine 416–asparagine 430 show a composition bias toward polar residues.

It localises to the nucleus. This Oryza sativa subsp. japonica (Rice) protein is B3 domain-containing protein Os03g0120900.